Reading from the N-terminus, the 445-residue chain is Tubulin beta-5 chain (445 aa).

Residues Gln11, Glu69, Ser138, Gly142, Thr143, Gly144, Asn204, and Asn226 each coordinate GTP. Position 69 (Glu69) interacts with Mg(2+). A disordered region spans residues 420–445 (AEYQQYQDATADDEYEEGEEEEEEAA). A compositionally biased stretch (acidic residues) spans 429-445 (TADDEYEEGEEEEEEAA).

This sequence belongs to the tubulin family. In terms of assembly, dimer of alpha and beta chains. A typical microtubule is a hollow water-filled tube with an outer diameter of 25 nm and an inner diameter of 15 nM. Alpha-beta heterodimers associate head-to-tail to form protofilaments running lengthwise along the microtubule wall with the beta-tubulin subunit facing the microtubule plus end conferring a structural polarity. Microtubules usually have 13 protofilaments but different protofilament numbers can be found in some organisms and specialized cells. Mg(2+) serves as cofactor.

Its subcellular location is the cytoplasm. The protein localises to the cytoskeleton. In terms of biological role, tubulin is the major constituent of microtubules, a cylinder consisting of laterally associated linear protofilaments composed of alpha- and beta-tubulin heterodimers. Microtubules grow by the addition of GTP-tubulin dimers to the microtubule end, where a stabilizing cap forms. Below the cap, tubulin dimers are in GDP-bound state, owing to GTPase activity of alpha-tubulin. The chain is Tubulin beta-5 chain from Gossypium hirsutum (Upland cotton).